A 105-amino-acid polypeptide reads, in one-letter code: Precursor of CEP15 (105 aa).

The first 29 residues, 1 to 29 (MDATKIKFDVILLSFLLIISGIPSNLGLS), serve as a signal peptide directing secretion. The propeptide occupies 30-90 (TSVRGTTRSE…PSPPVPDYDD (61 aa)). Over residues 68–80 (DYYDGGSSSSTTS) the composition is skewed to low complexity. A disordered region spans residues 68 to 105 (DYYDGGSSSSTTSPSPPVPDYDDIYRRQGDVPSPGIGH). Residues P99 and P101 each carry the hydroxyproline modification.

Belongs to the C-terminally encoded plant signaling peptide (CEP) family. Interacts with CEP receptors (e.g. CEPR1 and CEPR2). Post-translationally, the mature small signaling peptide is generated by proteolytic processing of the longer precursor.

The protein resides in the secreted. It localises to the extracellular space. The protein localises to the apoplast. Its function is as follows. Extracellular signaling peptide that may regulate primary root growth rate and systemic nitrogen (N)-demand signaling. The chain is Precursor of CEP15 from Arabidopsis thaliana (Mouse-ear cress).